Here is a 360-residue protein sequence, read N- to C-terminus: Inward rectifier potassium channel 13 (360 aa).

The Cytoplasmic portion of the chain corresponds to 1–50 (MDSSNCKVNAPLLSQRHRRMVTKDGHSTLQMDGAQRGLVYLRDAWGILMD). The helical transmembrane segment at 51-77 (MRWRWMMLVFSASFVVHWLVFAVLWYA) threads the bilayer. Residues 78–105 (VAEMNGDLEIDHDVPPENHTICVKHITS) lie on the Extracellular side of the membrane. Residues 106–122 (FTAAFSFSLETQLTIGY) constitute an intramembrane region (helical; Pore-forming). Residues 119 to 124 (TIGYGT) carry the Selectivity filter motif. The Extracellular segment spans residues 123 to 131 (GTMFPSGDC). Residues 132–157 (PSAIALLAIQMLLGLMLEAFITGAFV) traverse the membrane as a helical segment. The Cytoplasmic segment spans residues 158-360 (AKIARPKNRA…FQIAETGLTE (203 aa)). The residue at position 287 (Ser-287) is a Phosphoserine; by PKA.

It belongs to the inward rectifier-type potassium channel (TC 1.A.2.1) family. KCNJ13 subfamily. In terms of assembly, homotetramer. Interacts with RAB28; the interaction may facilitate cone outer segments phagocytosis. Phosphorylation at Ser-287 by PKA increases ionic currents. Expressed in retina.

It is found in the membrane. The protein localises to the cell membrane. The catalysed reaction is K(+)(in) = K(+)(out). With respect to regulation, inhibited by Ba(2+) and Cs(+), although sensitivity to those inhibitors is much lower than in other Kir channels. Its function is as follows. Inward rectifier potassium channels are characterized by a greater tendency to allow potassium to flow into the cell rather than out of it. Their voltage dependence is regulated by the concentration of extracellular potassium; as external potassium is raised, the voltage range of the channel opening shifts to more positive voltages. The inward rectification is mainly due to the blockage of outward current by internal magnesium. KCNJ13 has a very low single channel conductance, low sensitivity to block by external barium and cesium, and no dependence of its inward rectification properties on the internal blocking particle magnesium. This is Inward rectifier potassium channel 13 from Mus musculus (Mouse).